The chain runs to 328 residues: Peroxidase 59 (328 aa).

The signal sequence occupies residues 1-28 (MKTQTKVMGGHVLLTVFTLCMLCSGVRA). Gln-29 carries the post-translational modification Pyrrolidone carboxylic acid. 4 disulfide bridges follow: Cys-39/Cys-116, Cys-72/Cys-77, Cys-122/Cys-323, and Cys-200/Cys-232. The active-site Proton acceptor is His-70. Residues Asp-71, Val-74, Gly-76, Asp-78, and Ser-80 each contribute to the Ca(2+) site. Residue Pro-163 coordinates substrate. Residue Asn-182 is glycosylated (N-linked (GlcNAc...) asparagine). Heme b is bound at residue His-193. Residue Thr-194 coordinates Ca(2+). Residues Asn-209 and Asn-239 are each glycosylated (N-linked (GlcNAc...) asparagine). Ca(2+) contacts are provided by Asp-245, Thr-248, Thr-251, and Asp-253. N-linked (GlcNAc...) asparagine glycans are attached at residues Asn-281 and Asn-310.

It belongs to the peroxidase family. Classical plant (class III) peroxidase subfamily. Heme b is required as a cofactor. Requires Ca(2+) as cofactor. In terms of tissue distribution, slightly expressed in roots.

It is found in the secreted. The enzyme catalyses 2 a phenolic donor + H2O2 = 2 a phenolic radical donor + 2 H2O. In terms of biological role, removal of H(2)O(2), oxidation of toxic reductants, biosynthesis and degradation of lignin, suberization, auxin catabolism, response to environmental stresses such as wounding, pathogen attack and oxidative stress. These functions might be dependent on each isozyme/isoform in each plant tissue. The protein is Peroxidase 59 (PER59) of Arabidopsis thaliana (Mouse-ear cress).